We begin with the raw amino-acid sequence, 320 residues long: Prophage side tail fiber protein homolog StfQ (320 aa).

Disordered stretches follow at residues 147 to 213 and 241 to 270; these read SGRA…HKSS and TTSGSGQTRNAGKTSSDGAHTHSLSGTAAS. Polar residues-rich tracts occupy residues 172-206 and 241-258; these read DLGTETTSSFDYGTKSTNNTGAHTHSISGTANSAG and TTSGSGQTRNAGKTSSDG. Positions 261-270 are enriched in low complexity; sequence THSLSGTAAS.

The protein belongs to the tail fiber family.

This chain is Prophage side tail fiber protein homolog StfQ (stfQ), found in Escherichia coli (strain K12).